A 691-amino-acid polypeptide reads, in one-letter code: Glycine--tRNA ligase beta subunit (691 aa).

Belongs to the class-II aminoacyl-tRNA synthetase family. In terms of assembly, tetramer of two alpha and two beta subunits.

The protein resides in the cytoplasm. The enzyme catalyses tRNA(Gly) + glycine + ATP = glycyl-tRNA(Gly) + AMP + diphosphate. In Buchnera aphidicola subsp. Schizaphis graminum (strain Sg), this protein is Glycine--tRNA ligase beta subunit.